Here is a 459-residue protein sequence, read N- to C-terminus: Bifunctional protein GlmU (459 aa).

The pyrophosphorylase stretch occupies residues 1 to 229 (MSNFAIILAA…FDESLGVNDR (229 aa)). UDP-N-acetyl-alpha-D-glucosamine contacts are provided by residues 8 to 11 (LAAG), Lys22, Gln72, and 77 to 78 (GT). Asp102 provides a ligand contact to Mg(2+). 4 residues coordinate UDP-N-acetyl-alpha-D-glucosamine: Gly139, Glu154, Asn169, and Asn227. Residue Asn227 coordinates Mg(2+). Residues 230–250 (VALATAESVMRRRINHKHMVN) form a linker region. An N-acetyltransferase region spans residues 251–459 (GVSFVNPEAT…TRLPHHPKNQ (209 aa)). 2 residues coordinate UDP-N-acetyl-alpha-D-glucosamine: Arg332 and Lys350. His362 acts as the Proton acceptor in catalysis. 2 residues coordinate UDP-N-acetyl-alpha-D-glucosamine: Tyr365 and Asn376. Acetyl-CoA contacts are provided by residues Ala379, 385–386 (NY), Ser404, Ala422, and Arg439.

The protein in the N-terminal section; belongs to the N-acetylglucosamine-1-phosphate uridyltransferase family. In the C-terminal section; belongs to the transferase hexapeptide repeat family. As to quaternary structure, homotrimer. It depends on Mg(2+) as a cofactor.

The protein localises to the cytoplasm. The catalysed reaction is alpha-D-glucosamine 1-phosphate + acetyl-CoA = N-acetyl-alpha-D-glucosamine 1-phosphate + CoA + H(+). It carries out the reaction N-acetyl-alpha-D-glucosamine 1-phosphate + UTP + H(+) = UDP-N-acetyl-alpha-D-glucosamine + diphosphate. Its pathway is nucleotide-sugar biosynthesis; UDP-N-acetyl-alpha-D-glucosamine biosynthesis; N-acetyl-alpha-D-glucosamine 1-phosphate from alpha-D-glucosamine 6-phosphate (route II): step 2/2. It participates in nucleotide-sugar biosynthesis; UDP-N-acetyl-alpha-D-glucosamine biosynthesis; UDP-N-acetyl-alpha-D-glucosamine from N-acetyl-alpha-D-glucosamine 1-phosphate: step 1/1. It functions in the pathway bacterial outer membrane biogenesis; LPS lipid A biosynthesis. Functionally, catalyzes the last two sequential reactions in the de novo biosynthetic pathway for UDP-N-acetylglucosamine (UDP-GlcNAc). The C-terminal domain catalyzes the transfer of acetyl group from acetyl coenzyme A to glucosamine-1-phosphate (GlcN-1-P) to produce N-acetylglucosamine-1-phosphate (GlcNAc-1-P), which is converted into UDP-GlcNAc by the transfer of uridine 5-monophosphate (from uridine 5-triphosphate), a reaction catalyzed by the N-terminal domain. This is Bifunctional protein GlmU from Streptococcus pneumoniae (strain Taiwan19F-14).